A 644-amino-acid chain; its full sequence is Exoribonuclease 2 (644 aa).

An RNB domain is found at 189–516 (REDLTALDFV…NHRLLKAVIK (328 aa)). One can recognise an S1 motif domain in the interval 561-643 (DTRFAAEIVD…ETRSIIARPV (83 aa)).

It belongs to the RNR ribonuclease family. RNase II subfamily.

The protein localises to the cytoplasm. It catalyses the reaction Exonucleolytic cleavage in the 3'- to 5'-direction to yield nucleoside 5'-phosphates.. Its function is as follows. Involved in mRNA degradation. Hydrolyzes single-stranded polyribonucleotides processively in the 3' to 5' direction. The polypeptide is Exoribonuclease 2 (Shigella dysenteriae serotype 1 (strain Sd197)).